The chain runs to 486 residues: Zinc transporter 6 (486 aa).

Over 1–60 (MVALDVLGITDSDAPVYRQKQEADTLVLGTIHPFRKAHRSVLGKLAQEFRLVTSDRRSWK) the chain is Cytoplasmic. Residues 61 to 81 (ILLFGVLNVVCTGCLLMWCSS) form a helical membrane-spanning segment. Residues 82–91 (TNSMALTAYT) lie on the Extracellular side of the membrane. A helical transmembrane segment spans residues 92 to 112 (YLTIFDLFSLITCLLSLWVTM). Topologically, residues 113–125 (KKPSQIYSFGFQR) are cytoplasmic. The chain crosses the membrane as a helical span at residues 126–146 (FEVLAVFSSTVLVQLGSLFIL). Topologically, residues 147–161 (KESVERFVEQPEVHT) are extracellular. A helical transmembrane segment spans residues 162-182 (GRLLVGTFVALFFNLLTLLSV). The Cytoplasmic segment spans residues 183–227 (KNKPFVFVSEAASTSWLQEHVADLSRSLCGLIPALSSFLLPRMNP). Residues 228–248 (FVLINLAGAFALGITYMLIEI) form a helical membrane-spanning segment. Topologically, residues 249–255 (NNYNAMD) are extracellular. A helical transmembrane segment spans residues 256–276 (TASAVAIALMTFGTMYPMSVY). Residues 277 to 486 (SGKVLLQTTP…SGTYTGPPRP (210 aa)) are Cytoplasmic-facing. A compositionally biased stretch (low complexity) spans 394 to 411 (PSRAQGSEPTPATSTPAK). Positions 394–425 (PSRAQGSEPTPATSTPAKPSSPPPEFSFHTPG) are disordered.

The protein belongs to the cation diffusion facilitator (CDF) transporter (TC 2.A.4) family. SLC30A subfamily. Heterodimer with SLC30A5; form a functional zinc ion transmembrane transporter.

The protein localises to the golgi apparatus. It is found in the trans-Golgi network membrane. Functionally, has probably no intrinsic transporter activity but together with SLC30A5 forms a functional zinc ion:proton antiporter heterodimer, mediating zinc entry into the lumen of organelles along the secretory pathway. As part of that zinc ion:proton antiporter, contributes to zinc ion homeostasis within the early secretory pathway and regulates the activation and folding of enzymes like alkaline phosphatases and enzymes involved in phosphatidylinositol glycan anchor biosynthesis. The polypeptide is Zinc transporter 6 (slc30a6) (Danio rerio (Zebrafish)).